The following is a 466-amino-acid chain: UDP-N-acetylmuramate--L-alanine ligase (466 aa).

ATP is bound at residue 117 to 123; the sequence is GTHGKTT.

It belongs to the MurCDEF family.

The protein localises to the cytoplasm. The catalysed reaction is UDP-N-acetyl-alpha-D-muramate + L-alanine + ATP = UDP-N-acetyl-alpha-D-muramoyl-L-alanine + ADP + phosphate + H(+). Its pathway is cell wall biogenesis; peptidoglycan biosynthesis. Functionally, cell wall formation. The protein is UDP-N-acetylmuramate--L-alanine ligase of Streptomyces griseus subsp. griseus (strain JCM 4626 / CBS 651.72 / NBRC 13350 / KCC S-0626 / ISP 5235).